The primary structure comprises 173 residues: Ribosome maturation factor RimM (173 aa).

One can recognise a PRC barrel domain in the interval 98–170; that stretch reads EDEYYWCDLL…RMTVSLPEGL (73 aa).

The protein belongs to the RimM family. As to quaternary structure, binds ribosomal protein uS19.

The protein localises to the cytoplasm. Functionally, an accessory protein needed during the final step in the assembly of 30S ribosomal subunit, possibly for assembly of the head region. Essential for efficient processing of 16S rRNA. May be needed both before and after RbfA during the maturation of 16S rRNA. It has affinity for free ribosomal 30S subunits but not for 70S ribosomes. The protein is Ribosome maturation factor RimM of Geotalea uraniireducens (strain Rf4) (Geobacter uraniireducens).